The sequence spans 361 residues: NAD(P)H-quinone oxidoreductase subunit 1, chloroplastic (361 aa).

6 consecutive transmembrane segments (helical) span residues 25–45 (IWLL…VLVI), 102–122 (VAVV…HLVL), 125–145 (LSIG…GLLM), 246–266 (YSGI…LVSS), 298–318 (VFGT…FLFI), and 334–354 (LLNL…LLTT).

It belongs to the complex I subunit 1 family. As to quaternary structure, NDH is composed of at least 16 different subunits, 5 of which are encoded in the nucleus.

It is found in the plastid. Its subcellular location is the chloroplast thylakoid membrane. It catalyses the reaction a plastoquinone + NADH + (n+1) H(+)(in) = a plastoquinol + NAD(+) + n H(+)(out). The catalysed reaction is a plastoquinone + NADPH + (n+1) H(+)(in) = a plastoquinol + NADP(+) + n H(+)(out). In terms of biological role, NDH shuttles electrons from NAD(P)H:plastoquinone, via FMN and iron-sulfur (Fe-S) centers, to quinones in the photosynthetic chain and possibly in a chloroplast respiratory chain. The immediate electron acceptor for the enzyme in this species is believed to be plastoquinone. Couples the redox reaction to proton translocation, and thus conserves the redox energy in a proton gradient. This is NAD(P)H-quinone oxidoreductase subunit 1, chloroplastic from Nymphaea alba (White water-lily).